The primary structure comprises 411 residues: LL-diaminopimelate aminotransferase (411 aa).

Substrate contacts are provided by tyrosine 15 and glycine 42. Pyridoxal 5'-phosphate is bound by residues tyrosine 72, 108 to 109 (SK), tyrosine 132, asparagine 187, tyrosine 218, and 246 to 248 (SFS). Residues lysine 109, tyrosine 132, and asparagine 187 each contribute to the substrate site. At lysine 249 the chain carries N6-(pyridoxal phosphate)lysine. Residues arginine 257 and asparagine 292 each coordinate pyridoxal 5'-phosphate. Positions 292 and 388 each coordinate substrate.

It belongs to the class-I pyridoxal-phosphate-dependent aminotransferase family. LL-diaminopimelate aminotransferase subfamily. In terms of assembly, homodimer. Pyridoxal 5'-phosphate serves as cofactor.

The enzyme catalyses (2S,6S)-2,6-diaminopimelate + 2-oxoglutarate = (S)-2,3,4,5-tetrahydrodipicolinate + L-glutamate + H2O + H(+). It functions in the pathway amino-acid biosynthesis; L-lysine biosynthesis via DAP pathway; LL-2,6-diaminopimelate from (S)-tetrahydrodipicolinate (aminotransferase route): step 1/1. Involved in the synthesis of meso-diaminopimelate (m-DAP or DL-DAP), required for both lysine and peptidoglycan biosynthesis. Catalyzes the direct conversion of tetrahydrodipicolinate to LL-diaminopimelate. This Nostoc punctiforme (strain ATCC 29133 / PCC 73102) protein is LL-diaminopimelate aminotransferase.